Consider the following 379-residue polypeptide: Armadillo repeat-containing X-linked protein 3 (379 aa).

Residues 1 to 6 lie on the Mitochondrial intermembrane side of the membrane; that stretch reads MGYARK. Mitochondrion outer membrane (MOM)-targeting sequence stretches follow at residues 1-6 and 26-37; these read MGYARK and RLTRGRKQNKEK. Residues 7-29 form a helical; Signal-anchor membrane-spanning segment; that stretch reads VGWVTAGLVIGAGACYCIYRLTR. Residues 30–379 lie on the Cytoplasmic side of the membrane; that stretch reads GRKQNKEKMA…AEHMFPKSQE (350 aa). Phosphoserine is present on residues S61, S67, and S72. The segment at 89 to 98 is nuclear localization signal; that stretch reads RARARARARA. Positions 95-106 are enriched in basic residues; sequence RARATRARRAVQ. Residues 95–116 form a disordered region; the sequence is RARATRARRAVQKRASPNSDDT. S110 carries the post-translational modification Phosphoserine. ARM repeat units lie at residues 111–151, 153–192, and 233–272; these read PNSD…NNAA, AFNR…NLSV, and VTNE…NLAE.

The protein belongs to the eutherian X-chromosome-specific Armcx family. As to quaternary structure, interacts (via ARM domain) with MIRO1, MIRO2 and TRAK2. The interaction with Miro is calcium-dependent. Interacts with SOX10.

The protein resides in the mitochondrion outer membrane. It localises to the cytoplasm. Its subcellular location is the nucleus. Regulates mitochondrial aggregation and transport in axons in living neurons. May link mitochondria to the TRAK2-kinesin motor complex via its interaction with Miro and TRAK2. Mitochondrial distribution and dynamics is regulated through ARMCX3 protein degradation, which is promoted by PCK and negatively regulated by WNT1. Enhances the SOX10-mediated transactivation of the neuronal acetylcholine receptor subunit alpha-3 and beta-4 subunit gene promoters. The polypeptide is Armadillo repeat-containing X-linked protein 3 (ARMCX3) (Homo sapiens (Human)).